The following is a 161-amino-acid chain: SsrA-binding protein (161 aa).

The disordered stretch occupies residues 138–161 (DKRTDSKEKDWNRDKARIMKSSLR). Basic and acidic residues predominate over residues 139–154 (KRTDSKEKDWNRDKAR).

This sequence belongs to the SmpB family.

The protein resides in the cytoplasm. Required for rescue of stalled ribosomes mediated by trans-translation. Binds to transfer-messenger RNA (tmRNA), required for stable association of tmRNA with ribosomes. tmRNA and SmpB together mimic tRNA shape, replacing the anticodon stem-loop with SmpB. tmRNA is encoded by the ssrA gene; the 2 termini fold to resemble tRNA(Ala) and it encodes a 'tag peptide', a short internal open reading frame. During trans-translation Ala-aminoacylated tmRNA acts like a tRNA, entering the A-site of stalled ribosomes, displacing the stalled mRNA. The ribosome then switches to translate the ORF on the tmRNA; the nascent peptide is terminated with the 'tag peptide' encoded by the tmRNA and targeted for degradation. The ribosome is freed to recommence translation, which seems to be the essential function of trans-translation. This chain is SsrA-binding protein, found in Aliivibrio fischeri (strain MJ11) (Vibrio fischeri).